The following is a 275-amino-acid chain: 3-methyl-2-oxobutanoate hydroxymethyltransferase (275 aa).

Mg(2+) is bound by residues Asp44 and Asp83. 3-methyl-2-oxobutanoate-binding positions include 44–45 (DS), Asp83, and Lys113. Glu115 provides a ligand contact to Mg(2+). The active-site Proton acceptor is Glu182.

It belongs to the PanB family. Homodecamer; pentamer of dimers. It depends on Mg(2+) as a cofactor.

The protein localises to the cytoplasm. It carries out the reaction 3-methyl-2-oxobutanoate + (6R)-5,10-methylene-5,6,7,8-tetrahydrofolate + H2O = 2-dehydropantoate + (6S)-5,6,7,8-tetrahydrofolate. Its pathway is cofactor biosynthesis; (R)-pantothenate biosynthesis; (R)-pantoate from 3-methyl-2-oxobutanoate: step 1/2. Its function is as follows. Catalyzes the reversible reaction in which hydroxymethyl group from 5,10-methylenetetrahydrofolate is transferred onto alpha-ketoisovalerate to form ketopantoate. The protein is 3-methyl-2-oxobutanoate hydroxymethyltransferase of Enterococcus faecalis (strain ATCC 700802 / V583).